A 421-amino-acid polypeptide reads, in one-letter code: Exopolysaccharide production protein ExoF (421 aa).

An N-terminal signal peptide occupies residues 1–31 (MQSNRRSGKSAGSRMVSCFTRLALLAALAAS).

The protein localises to the periplasm. It participates in glycan metabolism; exopolysaccharide biosynthesis. Involved in succinoglycan (EPS I) synthesis. Needed for the addition of the first sugar (galactose) to the isoprenoid carrier. The sequence is that of Exopolysaccharide production protein ExoF (exoF) from Rhizobium meliloti (strain 1021) (Ensifer meliloti).